The chain runs to 73 residues: uncharacterized protein (73 aa).

Belongs to the asfivirus DP63R family.

This is an uncharacterized protein from Ornithodoros (relapsing fever ticks).